The sequence spans 692 residues: Mitogen-activated protein kinase kinase kinase 7-interacting protein 3 homolog (692 aa).

In terms of domain architecture, CUE spans 8–51; the sequence is LDIQVLNDLQQRFPEIPRDVVSQCMLQNNSNLDACYRALTQESC. Disordered stretches follow at residues 138 to 159, 206 to 333, and 349 to 427; these read NDQN…GVGT, YGTP…PYGP, and SQQR…VVMS. Polar residues-rich tracts occupy residues 215–230, 249–298, and 349–387; these read PSQN…NTAW, QSFQ…QTSH, and SQQR…SGSP. Positions 409 to 422 are enriched in low complexity; sequence SQPPTTTGSPTPSS. Residues 496 to 580 are a coiled coil; the sequence is ALLLHQRARM…QKEIDLLQSR (85 aa). The interval 598 to 662 is disordered; the sequence is SPGPAVPPNT…SPRPGRDEDF (65 aa). Basic and acidic residues predominate over residues 608 to 620; the sequence is CKKESSETTSGER. A RanBP2-type zinc finger spans residues 662–692; sequence FEGSPWNCNSCTFLNHPALNRCEQCEMPRFT.

Functionally, may play a role in signaling pathway. In Xenopus laevis (African clawed frog), this protein is Mitogen-activated protein kinase kinase kinase 7-interacting protein 3 homolog (map3k7ip3).